A 129-amino-acid polypeptide reads, in one-letter code: Phosphoribosyl-AMP cyclohydrolase (129 aa).

Mg(2+) is bound at residue Asp-76. Cys-77 is a Zn(2+) binding site. Asp-78 and Asp-80 together coordinate Mg(2+). Zn(2+) is bound by residues Cys-97 and Cys-104.

Belongs to the PRA-CH family. In terms of assembly, homodimer. Requires Mg(2+) as cofactor. Zn(2+) serves as cofactor.

It localises to the cytoplasm. The enzyme catalyses 1-(5-phospho-beta-D-ribosyl)-5'-AMP + H2O = 1-(5-phospho-beta-D-ribosyl)-5-[(5-phospho-beta-D-ribosylamino)methylideneamino]imidazole-4-carboxamide. The protein operates within amino-acid biosynthesis; L-histidine biosynthesis; L-histidine from 5-phospho-alpha-D-ribose 1-diphosphate: step 3/9. In terms of biological role, catalyzes the hydrolysis of the adenine ring of phosphoribosyl-AMP. This Polaromonas naphthalenivorans (strain CJ2) protein is Phosphoribosyl-AMP cyclohydrolase.